Here is a 173-residue protein sequence, read N- to C-terminus: Ribosome maturation factor RimM (173 aa).

The region spanning 94–166 is the PRC barrel domain; the sequence is VQEEPYIDII…KIIVELPMGF (73 aa).

It belongs to the RimM family. Binds ribosomal protein uS19.

Its subcellular location is the cytoplasm. Functionally, an accessory protein needed during the final step in the assembly of 30S ribosomal subunit, possibly for assembly of the head region. Essential for efficient processing of 16S rRNA. May be needed both before and after RbfA during the maturation of 16S rRNA. It has affinity for free ribosomal 30S subunits but not for 70S ribosomes. This is Ribosome maturation factor RimM from Amoebophilus asiaticus (strain 5a2).